The following is a 374-amino-acid chain: Flagellar P-ring protein 1 (374 aa).

An N-terminal signal peptide occupies residues 1 to 29 (MPGVRWVRIVGVACAALSALALSVTSASA).

The protein belongs to the FlgI family. As to quaternary structure, the basal body constitutes a major portion of the flagellar organelle and consists of four rings (L,P,S, and M) mounted on a central rod.

The protein resides in the periplasm. It is found in the bacterial flagellum basal body. Functionally, assembles around the rod to form the L-ring and probably protects the motor/basal body from shearing forces during rotation. In Bradyrhizobium diazoefficiens (strain JCM 10833 / BCRC 13528 / IAM 13628 / NBRC 14792 / USDA 110), this protein is Flagellar P-ring protein 1.